The chain runs to 161 residues: Tropomyosin (161 aa).

Residues 1–161 adopt a coiled-coil conformation; the sequence is MDKLREKINA…DEVHQALEDL (161 aa). Positions 40–52 are enriched in basic and acidic residues; that stretch reads EQEYESLSRKSEA. Disordered regions lie at residues 40-65 and 107-134; these read EQEYESLSRKSEAAESQLEELEEETK and EKMRQTDVKAEHFERRVQSLERERDDME.

In terms of assembly, homodimer.

It is found in the cytoplasm. Its subcellular location is the cytoskeleton. Functionally, forms part of the F-actin contractile ring during cytokinesis. The polypeptide is Tropomyosin (cdc8) (Schizosaccharomyces pombe (strain 972 / ATCC 24843) (Fission yeast)).